A 155-amino-acid polypeptide reads, in one-letter code: Ribosome maturation factor RimP (155 aa).

Belongs to the RimP family.

It is found in the cytoplasm. Required for maturation of 30S ribosomal subunits. The protein is Ribosome maturation factor RimP of Staphylococcus haemolyticus (strain JCSC1435).